The following is a 348-amino-acid chain: Calcium-gated potassium channel TvoK (348 aa).

A run of 3 helical transmembrane segments spans residues 19 to 39 (LTKV…LEFL), 52 to 72 (YFTA…GDVV), and 80 to 100 (VVAM…TATI). The region spanning 120-246 (KNHTIICNWN…VSAGATEVLS (127 aa)) is the RCK N-terminal domain. Residues 266 to 348 (DFILKSLSET…KKEVEEAIKG (83 aa)) form the RCK C-terminal domain.

In terms of assembly, heterooctamer composed of four full-length subunits and four soluble RCK domains.

The protein resides in the cell membrane. In terms of biological role, calcium-gated potassium channel. Can also be activated by Mg(2+), Mn(2+) and Ni(2+). In Thermoplasma volcanium (strain ATCC 51530 / DSM 4299 / JCM 9571 / NBRC 15438 / GSS1), this protein is Calcium-gated potassium channel TvoK.